We begin with the raw amino-acid sequence, 276 residues long: Anamorsin homolog (276 aa).

The N-terminal SAM-like domain stretch occupies residues methionine 1–tryptophan 152. The tract at residues tryptophan 152–valine 189 is linker. Residues cysteine 195, cysteine 211, cysteine 214, and cysteine 216 each contribute to the [2Fe-2S] cluster site. Residues cysteine 195–cysteine 216 form a fe-S binding site A region. Cysteine 237, cysteine 240, cysteine 248, and cysteine 251 together coordinate [4Fe-4S] cluster. 2 short sequence motifs (cx2C motif) span residues cysteine 237–cysteine 240 and cysteine 248–cysteine 251. The fe-S binding site B stretch occupies residues cysteine 237–cysteine 251.

It belongs to the anamorsin family. Monomer. It depends on [2Fe-2S] cluster as a cofactor. The cofactor is [4Fe-4S] cluster.

Its subcellular location is the cytoplasm. It localises to the mitochondrion intermembrane space. Component of the cytosolic iron-sulfur (Fe-S) protein assembly (CIA) machinery. Required for the maturation of extramitochondrial Fe-S proteins. Part of an electron transfer chain functioning in an early step of cytosolic Fe-S biogenesis, facilitating the de novo assembly of a [4Fe-4S] cluster on the cytosolic Fe-S scaffold complex. Electrons are transferred from NADPH via a FAD- and FMN-containing diflavin oxidoreductase. Together with the diflavin oxidoreductase, also required for the assembly of the diferric tyrosyl radical cofactor of ribonucleotide reductase (RNR), probably by providing electrons for reduction during radical cofactor maturation in the catalytic small subunit. In Schistosoma japonicum (Blood fluke), this protein is Anamorsin homolog.